The chain runs to 535 residues: Endogenous retrovirus group V member 2 Env polyprotein (535 aa).

The signal sequence occupies residues 1-21 (MTEKFLFLYLSLLPMPLLSQA). At 22-321 (QWNENSLVSF…NTTQPRQKRA (300 aa)) the chain is on the extracellular side. N68 is a glycosylation site (N-linked (GlcNAc...) asparagine). Residues 322 to 342 (LGLILAGMGAAIGMIAPWGGF) form a helical membrane-spanning segment. Topologically, residues 343-456 (TYHDVTLRNL…VKSALPSLNW (114 aa)) are cytoplasmic. Residues 457-477 (FVPLLGPATVILLLFLFGPCF) form a helical membrane-spanning segment. The Extracellular portion of the chain corresponds to 478–535 (FNLLIKCVSSRIKQFHMKSPQMERYQLSVIGGPSTYKHISPLDASGQRFRETMEEFSL).

This sequence belongs to the gamma type-C retroviral envelope protein family. In terms of tissue distribution, expressed in placenta.

It localises to the membrane. The polypeptide is Endogenous retrovirus group V member 2 Env polyprotein (ERVV-2) (Homo sapiens (Human)).